The following is a 186-amino-acid chain: Ribosome-recycling factor (186 aa).

Residues 135–162 (DGMDGLKKAEKDGDIGQDESRAQSERVQ) form a disordered region.

It belongs to the RRF family.

Its subcellular location is the cytoplasm. In terms of biological role, responsible for the release of ribosomes from messenger RNA at the termination of protein biosynthesis. May increase the efficiency of translation by recycling ribosomes from one round of translation to another. The chain is Ribosome-recycling factor from Sinorhizobium fredii (strain NBRC 101917 / NGR234).